A 2779-amino-acid chain; its full sequence is Protein lava lamp (2779 aa).

3 disordered regions span residues 31-62 (LAGS…DSLK), 79-98 (ALRK…SMES), and 110-135 (KTRS…VSLL). Polar residues predominate over residues 33-51 (GSSNDLSSLQNVSASTTRG). 2 positions are modified to phosphoserine: Ser34 and Ser35. Residues 52-85 (TKGKGRLDSLKENLYKQQERLTALKERALRKSQD) are a coiled coil. Residues 79–91 (ALRKSQDERHKSS) show a composition bias toward basic and acidic residues. Phosphoserine is present on residues Ser95, Ser98, Ser122, and Ser133. The stretch at 141–175 (EKLLMLTQRTEQNRALLEQRKRDLAKSLLSVKSNI) forms a coiled coil. A phosphoserine mark is found at Ser186, Ser352, and Ser354. 2 coiled-coil regions span residues 220–607 (ESRV…AESI) and 659–716 (GETL…KDLI). A compositionally biased stretch (basic and acidic residues) spans 337-352 (ERQRNLELEQEQEKAS). Disordered stretches follow at residues 337 to 366 (ERQR…DAQV), 622 to 662 (RPAS…GETL), 711 to 730 (REKD…QELS), and 1716 to 1753 (QAQL…GGDA). Composition is skewed to low complexity over residues 717-730 (SSTS…QELS) and 1716-1740 (QAQL…QSQQ). Coiled coils occupy residues 751–1733 (LFEK…QHHH), 1785–1863 (TIED…KLIQ), and 1941–2433 (NEAP…QSQN). Disordered stretches follow at residues 2348–2367 (EDKE…GETV), 2484–2507 (EEVT…EATS), 2552–2578 (NRGG…TANE), and 2633–2665 (TERS…AGSN). Residues 2488-2502 (QQQQRELPQSQQSTQ) show a composition bias toward low complexity. Positions 2504–2544 (EATSDIMQKMQKALETQEMEIVTLKEQLAIRSAEYARLAAQ) form a coiled coil. Residues 2600–2641 (DMRVEEMIVELVQLLEERDHLQLKLSDTLRQLETERSRVSDE) are a coiled coil. Over residues 2643–2665 (SATASSSAASSSSPSKISSAGSN) the composition is skewed to low complexity.

In terms of assembly, interacts with CLIP-190 and spectrin separately.

It localises to the golgi apparatus. Its subcellular location is the cytoplasmic vesicle. The protein resides in the autophagosome. Functionally, lva and spectrin may form a Golgi-based scaffold that mediates interaction of Golgi bodies with microtubules and facilitates Golgi-derived membrane secretion required for the formation of furrows during cellularization. Under starvation conditions recruited by ema to developing autophagsosomes where it may function in autophagosome growth. The chain is Protein lava lamp (lva) from Drosophila melanogaster (Fruit fly).